Consider the following 269-residue polypeptide: Cytochrome c oxidase subunit 3 (269 aa).

The next 6 helical transmembrane spans lie at 46 to 66, 90 to 110, 138 to 160, 167 to 187, 207 to 227, and 247 to 267; these read NSYYLFFISLILVISSMAFWF, GVILFIVSEALFFLAIFWAFF, PLLNTVILLSSGATVTYAHHSLI, ALYGSIITILLAIIFTVFQGV, FGTGFHGFHVIIGTIFLAVAL, and ILYWHFVDVVWLFLYVSIYYW.

It belongs to the cytochrome c oxidase subunit 3 family. Component of the cytochrome c oxidase (complex IV, CIV), a multisubunit enzyme composed of a catalytic core of 3 subunits and several supernumerary subunits. The complex exists as a monomer or a dimer and forms supercomplexes (SCs) in the inner mitochondrial membrane with ubiquinol-cytochrome c oxidoreductase (cytochrome b-c1 complex, complex III, CIII).

The protein localises to the mitochondrion inner membrane. It catalyses the reaction 4 Fe(II)-[cytochrome c] + O2 + 8 H(+)(in) = 4 Fe(III)-[cytochrome c] + 2 H2O + 4 H(+)(out). Its function is as follows. Component of the cytochrome c oxidase, the last enzyme in the mitochondrial electron transport chain which drives oxidative phosphorylation. The respiratory chain contains 3 multisubunit complexes succinate dehydrogenase (complex II, CII), ubiquinol-cytochrome c oxidoreductase (cytochrome b-c1 complex, complex III, CIII) and cytochrome c oxidase (complex IV, CIV), that cooperate to transfer electrons derived from NADH and succinate to molecular oxygen, creating an electrochemical gradient over the inner membrane that drives transmembrane transport and the ATP synthase. Cytochrome c oxidase is the component of the respiratory chain that catalyzes the reduction of oxygen to water. Electrons originating from reduced cytochrome c in the intermembrane space (IMS) are transferred via the dinuclear copper A center (CU(A)) of subunit 2 and heme A of subunit 1 to the active site in subunit 1, a binuclear center (BNC) formed by heme A3 and copper B (CU(B)). The BNC reduces molecular oxygen to 2 water molecules using 4 electrons from cytochrome c in the IMS and 4 protons from the mitochondrial matrix. The protein is Cytochrome c oxidase subunit 3 (COIII) of Podospora anserina (strain S / ATCC MYA-4624 / DSM 980 / FGSC 10383) (Pleurage anserina).